We begin with the raw amino-acid sequence, 563 residues long: MSETINTAAQFPSFEKPTVQFNERGWGPCELPDTFKDVPYQPFSKNDRLGKICDWTSTSNNDKKYQNKYASSFGTGNQYSYYHEEDETTFHLVDTARVQKPPHQRGRFRNMRGRGGRGRNPRGGLNNHHHHGMTTLNGKNVKARDTRRGMGKKFGHRGPPPKMRESSVAVRADWASIEEMDFPRLIKLSLPNIKDGVDIATCGTLEYYDKTYDRINVKNEKPLQKIDRIVHTVTTTDDPVIRRLSKTVGNVFATDAILATIMCSTRSNYSWDIVIEKVGDKIFMDKRDHTEFDLLTVNESSVEPPTDDDSSCNSPRNLAIEATFINHNFSQQVLKTGDQEAKFKFEEPNPFISEDEDIQVASVGYRYKKWELGSDIVLVARCEHDGVLQTPSGEPQFMSIKALNEWDSKLANGVEWRQKLDTQRGAVLANELRNNACKLAKWTVQAVLAGSDQLKLGYVSRINPRDHSRHVILGTQQFKPHEFATQINLSMDNAWGVLRCIIDLVMKQKDGKYLIMKDPNKPIIRLYDIPDNTFDSDDSDDGEGDDGEGFQQVYNYANNSNKI.

A disordered region spans residues 98-136 (VQKPPHQRGRFRNMRGRGGRGRNPRGGLNNHHHHGMTTL). Basic residues predominate over residues 100-120 (KPPHQRGRFRNMRGRGGRGRN). Positions 291–305 (EFDLLTVNESSVEPP) are RNA gate.

It belongs to the eIF-3 subunit D family. As to quaternary structure, component of the eukaryotic translation initiation factor 3 (eIF-3) complex. The eIF-3 complex interacts with pix.

The protein localises to the cytoplasm. Functionally, mRNA cap-binding component of the eukaryotic translation initiation factor 3 (eIF-3) complex, which is involved in protein synthesis of a specialized repertoire of mRNAs and, together with other initiation factors, stimulates binding of mRNA and methionyl-tRNAi to the 40S ribosome. The eIF-3 complex specifically targets and initiates translation of a subset of mRNAs involved in cell proliferation. In the eIF-3 complex, eif3d specifically recognizes and binds the 7-methylguanosine cap of a subset of mRNAs. The sequence is that of Eukaryotic translation initiation factor 3 subunit D-1 from Drosophila pseudoobscura pseudoobscura (Fruit fly).